The primary structure comprises 266 residues: 4-hydroxy-tetrahydrodipicolinate reductase (266 aa).

Residue 10-15 participates in NAD(+) binding; sequence GPRGRM. NADP(+) is bound at residue K38. NAD(+) contacts are provided by residues 99–101 and 125–128; these read GTT and APNF. Catalysis depends on H155, which acts as the Proton donor/acceptor. H156 lines the (S)-2,3,4,5-tetrahydrodipicolinate pocket. The active-site Proton donor is K159. Position 165–166 (165–166) interacts with (S)-2,3,4,5-tetrahydrodipicolinate; the sequence is GT.

This sequence belongs to the DapB family.

Its subcellular location is the cytoplasm. It carries out the reaction (S)-2,3,4,5-tetrahydrodipicolinate + NAD(+) + H2O = (2S,4S)-4-hydroxy-2,3,4,5-tetrahydrodipicolinate + NADH + H(+). The catalysed reaction is (S)-2,3,4,5-tetrahydrodipicolinate + NADP(+) + H2O = (2S,4S)-4-hydroxy-2,3,4,5-tetrahydrodipicolinate + NADPH + H(+). It functions in the pathway amino-acid biosynthesis; L-lysine biosynthesis via DAP pathway; (S)-tetrahydrodipicolinate from L-aspartate: step 4/4. Catalyzes the conversion of 4-hydroxy-tetrahydrodipicolinate (HTPA) to tetrahydrodipicolinate. This chain is 4-hydroxy-tetrahydrodipicolinate reductase, found in Bacillus mycoides (strain KBAB4) (Bacillus weihenstephanensis).